The following is a 571-amino-acid chain: NADH-quinone oxidoreductase subunit C/D (571 aa).

Residues 1-171 form an NADH dehydrogenase I subunit C region; that stretch reads MQASEKTLNE…NLSNTMNYRR (171 aa). Residues 194–571 form an NADH dehydrogenase I subunit D region; sequence AQVVLNWGPL…LDPVVGEVDR (378 aa).

This sequence in the N-terminal section; belongs to the complex I 30 kDa subunit family. The protein in the C-terminal section; belongs to the complex I 49 kDa subunit family. NDH-1 is composed of 13 different subunits. Subunits NuoB, CD, E, F, and G constitute the peripheral sector of the complex.

The protein localises to the cell inner membrane. It catalyses the reaction a quinone + NADH + 5 H(+)(in) = a quinol + NAD(+) + 4 H(+)(out). NDH-1 shuttles electrons from NADH, via FMN and iron-sulfur (Fe-S) centers, to quinones in the respiratory chain. The immediate electron acceptor for the enzyme in this species is believed to be ubiquinone. Couples the redox reaction to proton translocation (for every two electrons transferred, four hydrogen ions are translocated across the cytoplasmic membrane), and thus conserves the redox energy in a proton gradient. This is NADH-quinone oxidoreductase subunit C/D (nuoC) from Hydrogenobaculum sp. (strain Y04AAS1).